Reading from the N-terminus, the 320-residue chain is tRNA (guanine(10)-N2)-dimethyltransferase (320 aa).

One can recognise a THUMP domain in the interval 46 to 136 (EKFFERLAYT…DDKCYVGLLE (91 aa)).

Belongs to the methyltransferase superfamily. Trm-G10 family. Monomer.

It localises to the cytoplasm. The catalysed reaction is guanosine(10) in tRNA + 2 S-adenosyl-L-methionine = N(2)-dimethylguanosine(10) in tRNA + 2 S-adenosyl-L-homocysteine + 2 H(+). In terms of biological role, catalyzes the adenosylmethionine-dependent methylation of the exocyclic amino group (N(2)) of guanosine at position 10 of various tRNAs. Acts via a two-step process that leads to the formation of either N(2)-monomethyl (m(2)G) or N(2)-dimethylguanosine (m(2)(2)G). In Archaeoglobus fulgidus (strain ATCC 49558 / DSM 4304 / JCM 9628 / NBRC 100126 / VC-16), this protein is tRNA (guanine(10)-N2)-dimethyltransferase (trmG10).